The following is a 346-amino-acid chain: Haptoglobin-related protein (346 aa).

Residues Asp1–Phe16 constitute a signal peptide (not cleaved). The 54-residue stretch at Phe32 to Cys85 folds into the Sushi domain. In terms of domain architecture, Peptidase S1 spans Ile102–Ala344. 2 cysteine pairs are disulfide-bonded: Cys249–Cys280 and Cys291–Cys321.

The protein belongs to the peptidase S1 family.

The protein localises to the secreted. Its function is as follows. Primate-specific plasma protein associated with apolipoprotein L-I (apoL-I)-containing high-density lipoprotein (HDL). Binds hemoglobin with high affinity and may contribute to the clearance of cell-free hemoglobin to allow hepatic recycling of heme iron. The chain is Haptoglobin-related protein (HPR) from Pan troglodytes (Chimpanzee).